The chain runs to 256 residues: Omega-amidase YafV (256 aa).

The CN hydrolase domain maps to 4-234 (LKITLLQQPL…ATRIDAELSM (231 aa)). The active-site Proton acceptor is Glu-42. Lys-107 is an active-site residue. Cys-141 serves as the catalytic Nucleophile.

Belongs to the carbon-nitrogen hydrolase superfamily. NIT1/NIT2 family.

It catalyses the reaction a monoamide of a dicarboxylate + H2O = a dicarboxylate + NH4(+). Functionally, hydrolyzes alpha-ketoglutaramate (a-KGM) to alpha-ketoglutarate (alpha-KG) and ammonia (specific activity 6.65 umol/min/mg), has weak activity on L-glutamine, almost no activity on deaminated glutathione (dGSH) and none on glutathione. May function as a metabolite repair enzyme. This Escherichia coli (strain B / BL21-DE3) protein is Omega-amidase YafV (yafV).